We begin with the raw amino-acid sequence, 72 residues long: ATP synthase subunit c (72 aa).

2 helical membrane-spanning segments follow: residues 1-21 and 48-68; these read MSLGVLAAAIAVGLGALGAGI and MFIGVALVEALPIIGVVFSFI.

It belongs to the ATPase C chain family. F-type ATPases have 2 components, F(1) - the catalytic core - and F(0) - the membrane proton channel. F(1) has five subunits: alpha(3), beta(3), gamma(1), delta(1), epsilon(1). F(0) has three main subunits: a(1), b(2) and c(10-14). The alpha and beta chains form an alternating ring which encloses part of the gamma chain. F(1) is attached to F(0) by a central stalk formed by the gamma and epsilon chains, while a peripheral stalk is formed by the delta and b chains.

The protein resides in the cell membrane. F(1)F(0) ATP synthase produces ATP from ADP in the presence of a proton or sodium gradient. F-type ATPases consist of two structural domains, F(1) containing the extramembraneous catalytic core and F(0) containing the membrane proton channel, linked together by a central stalk and a peripheral stalk. During catalysis, ATP synthesis in the catalytic domain of F(1) is coupled via a rotary mechanism of the central stalk subunits to proton translocation. Functionally, key component of the F(0) channel; it plays a direct role in translocation across the membrane. A homomeric c-ring of between 10-14 subunits forms the central stalk rotor element with the F(1) delta and epsilon subunits. The polypeptide is ATP synthase subunit c (Geobacillus stearothermophilus (Bacillus stearothermophilus)).